The chain runs to 178 residues: FANCD2 opposite strand protein (178 aa).

In Mus musculus (Mouse), this protein is FANCD2 opposite strand protein (Fancd2os).